The following is a 230-amino-acid chain: Large ribosomal subunit protein uL1 (230 aa).

The protein belongs to the universal ribosomal protein uL1 family. As to quaternary structure, part of the 50S ribosomal subunit.

Its function is as follows. Binds directly to 23S rRNA. The L1 stalk is quite mobile in the ribosome, and is involved in E site tRNA release. In terms of biological role, protein L1 is also a translational repressor protein, it controls the translation of the L11 operon by binding to its mRNA. The protein is Large ribosomal subunit protein uL1 of Lactobacillus johnsonii (strain CNCM I-12250 / La1 / NCC 533).